Here is a 196-residue protein sequence, read N- to C-terminus: DnaA initiator-associating protein DiaA (196 aa).

The SIS domain maps to 34-196 (MVQSLLNGNK…DNTLFPHQND (163 aa)).

Belongs to the SIS family. DiaA subfamily. As to quaternary structure, homotetramer; dimer of dimers.

Its function is as follows. Required for the timely initiation of chromosomal replication via direct interactions with the DnaA initiator protein. This is DnaA initiator-associating protein DiaA from Pectobacterium carotovorum subsp. carotovorum (strain PC1).